The sequence spans 1069 residues: RE1-silencing transcription factor (1069 aa).

The interval 32-121 is interaction with SIN3A; it reads DLHDLSKAEL…SLELSVVEPQ (90 aa). The interval 43 to 57 is interaction with SIN3B; that stretch reads APQLIMLANVALTGE. A disordered region spans residues 85–104; that stretch reads SDSEGEGLEESAELKGDPSG. The interval 144 to 417 is interaction with ZFP90; that stretch reads PVAEDKCKNL…KSKHPTCPSK (274 aa). The C2H2-type 1 zinc-finger motif lies at 158–180; the sequence is FRCKPCQYEAESEEQFVHHIRVH. The interval 200 to 211 is required for binding to the neuron-restrictive silencer element; it reads SGASPSEEGEFS. 7 C2H2-type zinc fingers span residues 215 to 237, 247 to 269, 275 to 297, 303 to 325, 331 to 354, 360 to 382, and 388 to 411; these read IRCDRCGYNTNRYDHYTAHLKHH, YKCIICTYTTVSEYHWRKHLRNH, YTCSKCNYFSTEKNNYVQHVRTH, YKCELCPYSSSQKTHLTRHMRTH, FKCDQCNYVASNQHEVTRHARQVH, LNCPHCDYKTADRSNFKKHVELH, and FNCPVCDYAASKKCNLQYHFKSKH. 2 disordered regions span residues 425–737 and 830–1022; these read KLKK…MELP and KASK…GKEG. The segment covering 451 to 482 has biased composition (basic and acidic residues); sequence EQAKTKGVDASARRSERPVKGVGKDVPKEKKP. Positions 484–493 are enriched in polar residues; the sequence is SNASVVQVTT. 2 stretches are compositionally biased toward basic and acidic residues: residues 498–511 and 554–576; these read SAVETKAAEGKHTD and ESKPKTSGEVPKGSRVEDRKADK. Residues 584–600 show a composition bias toward basic residues; that stretch reads KGGKKTALKTKTAKKGS. Residues 630 to 643 show a composition bias toward polar residues; the sequence is AVVTPSGSTQTELS. Composition is skewed to pro residues over residues 679–706 and 713–734; these read PSPPQEPPQVEPPACVEPPPPVEPPCPM and PSPPMEPSQVEPPPHLEPPLPM. 2 stretches are compositionally biased toward basic and acidic residues: residues 851 to 860 and 876 to 886; these read RREETPKDQE and GGTEEAGESRA. A compositionally biased stretch (low complexity) spans 894–904; that stretch reads STSALSSEQSS. The span at 930-943 shows a compositional bias: basic and acidic residues; it reads TEQKTDRVPLKDSA. Ser948 carries the phosphoserine modification. Residues 957-968 are compositionally biased toward low complexity; it reads EAAAPAVVASPP. Positions 981–1059 are interaction with RCOR1; sequence EGIHSHDGSD…HLNRHLVNVY (79 aa). The segment at 1032–1054 adopts a C2H2-type 9 zinc-finger fold; it reads FVCIFCDRSFRKEKDYSKHLNRH.

Isoform 1 and isoform 6 form heterodimers. Isoform 6: Forms homodimers and homooligomers; binds to the neuron-restrictive silencer element (NRSE) as monomer. Interacts with SIN3A, SIN3B and RCOR1. Interacts with CDYL. Interacts with EHMT1 and EHMT2 only in the presence of CDYL. Part of a complex containing at least CDYL, REST, WIZ, SETB1, EHMT1 and EHMT2. Interacts (via zinc-finger DNA-binding domain) with ZFP90 (via N- and C-termini); the interaction inhibits REST repressor activity. Interacts (via C2H2-type zinc finger 5) with PRICKLE1. Interacts with FBXW11 and BTRC. Interacts with USP7. O-glycosylated. Post-translationally, phosphorylated; phosphorylation is required for ubiquitination. In terms of processing, ubiquitinated; ubiquitination is mediated by BTRC and leads to proteasomal degradation in G2 phase. Ubiquitination increases during neuronal differentiation. Deubiquitinated by USP7; leading to its stabilization and promoting the maintenance of neural progenitor cells. As to expression, expressed in the hippocampus including the granule cell layer of the dentate gyrus, the pyramidal cell layers of CA1 and CA3, the apical and basilar dendrite layers of the stratum radiatum and stratum oriens of CA1, the stratum lucidum and stratum oriens of CA3 and in astroglia (at protein level). Expressed in the brain, with the highest levels in the neurons of hippocampus, pons/medulla and midbrain.

The protein resides in the nucleus. The protein localises to the cytoplasm. Its function is as follows. Transcriptional repressor which binds neuron-restrictive silencer element (NRSE) and represses neuronal gene transcription in non-neuronal cells. Restricts the expression of neuronal genes by associating with two distinct corepressors, SIN3A and RCOR1, which in turn recruit histone deacetylase to the promoters of REST-regulated genes. Mediates repression by recruiting the BHC complex at RE1/NRSE sites which acts by deacetylating and demethylating specific sites on histones, thereby acting as a chromatin modifier. Transcriptional repression by REST-CDYL via the recruitment of histone methyltransferase EHMT2 may be important in transformation suppression. Represses the expression of SRRM4 in non-neural cells to prevent the activation of neural-specific splicing events and to prevent production of REST isoform 6. Repressor activity may be inhibited by forming heterodimers with isoform 6, thereby preventing binding to NRSE or binding to corepressors and leading to derepression of target genes. Also maintains repression of neuronal genes in neural stem cells, and allows transcription and differentiation into neurons by dissociation from RE1/NRSE sites of target genes. Thereby is involved in maintaining the quiescent state of adult hippocampal neural stem cells and preventing premature differentiation into mature neurons. Plays a role in the developmental switch in synaptic NMDA receptor composition during postnatal development, by repressing GRIN2B expression and thereby altering NMDA receptor properties from containing primarily GRIN2B to primarily GRIN2A subunits. Acts as a regulator of osteoblast differentiation. Key repressor of gene expression in hypoxia; represses genes in hypoxia by direct binding to an RE1/NRSE site on their promoter regions. May also function in stress resistance in the brain during aging; possibly by regulating expression of genes involved in cell death and in the stress response. Repressor of gene expression in the hippocampus after ischemia by directly binding to RE1/NRSE sites and recruiting SIN3A and RCOR1 to promoters of target genes, thereby promoting changes in chromatin modifications and ischemia-induced cell death. After ischemia, might play a role in repression of miR-132 expression in hippocampal neurons, thereby leading to neuronal cell death. In terms of biological role, binds to the 3' region of the neuron-restrictive silencer element (NRSE), with lower affinity than full-length REST isoform 1. Exhibits weaker repressor activity compared to isoform 1. May negatively regulate the repressor activity of isoform 1 by binding to isoform 1, thereby preventing its binding to NRSE and leading to derepression of target genes. However, in another study, does not appear to be implicated in repressor activity of a NRSE motif-containing reporter construct nor in inhibitory activity on the isoform 1 transcriptional repressor activity. Post-transcriptional inactivation of REST by SRRM4-dependent alternative splicing into isoform 6 is required in mechanosensory hair cells in the inner ear for derepression of neuronal genes and hearing. In Rattus norvegicus (Rat), this protein is RE1-silencing transcription factor (Rest).